The following is a 212-amino-acid chain: MATTIARIGSANWAKLLVLLWLVQLATAGEPNPACKTLPTVDKDNEDKCCDVPEMFPNETLNACMEEHQQSSKPPLQKSCEITTCVLKKQSLIKSDNTVDKDKIKSYIKEMVKGSDEWKTLVEKAVLEECLPLMDKDPSNVLSKLKSSLGDCDPAPALTIACAAAKFYVNCPAKDRTKSPMCDEWRTFLSKCSNSLEDLNAIFMVLENQKTR.

Residues Met-1–Ala-28 form the signal peptide. Intrachain disulfides connect Cys-64–Cys-85, Cys-80–Cys-152, and Cys-130–Cys-162.

This sequence belongs to the PBP/GOBP family.

Its subcellular location is the secreted. Functionally, present in the aqueous fluid surrounding olfactory sensory dendrites and are thought to aid in the capture and transport of hydrophobic odorants into and through this fluid. In Anopheles gambiae (African malaria mosquito), this protein is General odorant-binding protein 68 (Obp68).